A 127-amino-acid chain; its full sequence is UPF0102 protein ERGA_CDS_00540 (127 aa).

This sequence belongs to the UPF0102 family.

The protein is UPF0102 protein ERGA_CDS_00540 of Ehrlichia ruminantium (strain Gardel).